We begin with the raw amino-acid sequence, 347 residues long: MSDILSSLAYLTGKPVASAKIKAQPEHFQVREDLGFAFTGEGEHLMVRIRKTGENTSFVANELAKACGVKSKDVSWAGLKDRHAVTEQWLSVHLPKGETPDFSTFLAQYPSIEILATDRHNKKLRPGDLIGNEFVVTLSEVTDMADVEQRLEKVKQVGVPNYFGSQRFGNDGNNLDEARRWGRENVRTRNQNKRSMYLSAARSWIFNRIVSARLENGVFDKFIDGDIAQTSQGLLAVDASNLADMQNKLALSEVEITAALAGDNALPTQADALALEQPFIDEEPDLMALIRGNRMRHDRREIALKPKDLAWNVEGNNITLTFSLDAGSFATSIVRELVNEVKVEREY.

Asp-81 (nucleophile) is an active-site residue. The TRUD domain maps to 158–305 (GVPNYFGSQR…RHDRREIALK (148 aa)).

This sequence belongs to the pseudouridine synthase TruD family.

It catalyses the reaction uridine(13) in tRNA = pseudouridine(13) in tRNA. In terms of biological role, responsible for synthesis of pseudouridine from uracil-13 in transfer RNAs. This is tRNA pseudouridine synthase D from Vibrio parahaemolyticus serotype O3:K6 (strain RIMD 2210633).